The sequence spans 57 residues: UPF0057 membrane protein T23F2.4 (57 aa).

2 helical membrane-spanning segments follow: residues 3-23 and 36-56; these read ITCMDIPKFLFALLLPPVGVF and ILLTILGYIPGIIYACYIILA.

Belongs to the UPF0057 (PMP3) family.

It is found in the membrane. The chain is UPF0057 membrane protein T23F2.4 from Caenorhabditis elegans.